The chain runs to 465 residues: Protein Loquacious (465 aa).

The interval 1 to 337 is necessary for enhancing pre-miRNA processing by Dcr-1; sequence MDQENFHGSS…DSICGELEGE (337 aa). Residues 1-379 are not required for interaction with Dcr-1; that stretch reads MDQENFHGSS…TLKNATGKKL (379 aa). The segment at 1 to 392 is important for homodimerization and interaction with Dcr-1; sequence MDQENFHGSS…QKTCLKNNKI (392 aa). A sufficient for binding RNA region spans residues 129–211; the sequence is NGLAMKTPVS…DKLIGAQLPE (83 aa). The interval 129 to 322 is necessary for promoting preferential binding of Dcr-2 to the less stably base paired ends of siRNAs; that stretch reads NGLAMKTPVS…WMRLQETPID (194 aa). The 72-residue stretch at 135–206 folds into the DRBM 1 domain; sequence TPVSILQELL…ARALIDKLIG (72 aa). An enables simultaneous binding of both DRBM 1 and 2 domains to dsRNA region spans residues 209–249; that stretch reads LPESPSSSAGPSVTGLTVAGSGGDGNANATGGGDASDKTVG. The disordered stretch occupies residues 210-246; the sequence is PESPSSSAGPSVTGLTVAGSGGDGNANATGGGDASDK. Over residues 211-223 the composition is skewed to polar residues; sequence ESPSSSAGPSVTG. The segment at 220–465 is necessary and sufficient for enhancing processing of pre-miRNAs by Dcr-1; it reads SVTGLTVAGS…LEYLKIMTKK (246 aa). Over residues 228 to 242 the composition is skewed to gly residues; the sequence is GSGGDGNANATGGGD. The tract at residues 245–322 is sufficient for binding RNA; sequence DKTVGNPIGW…WMRLQETPID (78 aa). The DRBM 2 domain maps to 250 to 318; sequence NPIGWLQEMC…AHRMWMRLQE (69 aa). The necessary for binding pre-miRNA stretch occupies residues 308–309; it reads AA. The interval 338–359 is required for binding to Dcr-2 and to fully enhance Dcr-2 mediated cleavage of 3' overhanging termini (3'ovr) and blunt termini (BLT) dsRNAs. However, this region is dispensable for binding the dsRNA substrates; sequence PRSSENYYGELKDISVPTLTTQ. The interval 340–465 is necessary for interaction with Dcr-1; the sequence is SSENYYGELK…LEYLKIMTKK (126 aa). Positions 392-463 are sufficent for binding to Dcr-1; it reads IDYIKLLGEI…NALEYLKIMT (72 aa). The DRBM 3 domain occupies 393-461; it reads DYIKLLGEIA…AQNALEYLKI (69 aa).

As to quaternary structure, homodimer. Interacts with dicer enzyme Dcr-1. In terms of assembly, component of the miRNA-directed RNA-induced loading complex (miRLC), composed of at least Dcr-1, AGO1 and loqs isoform PB (loqs-PB), which processes pre-miRNAs and loads the resulting miRNAs into the Argonaute 1 (AGO1)-containing RNA-induced silencing complex (miRISC) to target the selective destruction of homologous RNAs. Interacts (via DRBM 3 domain) with dicer enzyme Dcr-1 (via helicase domain). Different regions of the Dcr-1-loqs-PB heterodimer collaborate to recognize, bind and position the pre-miRNA for Dcr-1 mediated cleavage. In the absence of miRNA substrates, the heterodimer favors a closed, catalytically incompetent, conformation, whereas binding of authentic pre-miRNA substrates stabilizes the relatively rare open, catalytically competent, conformation of the heterodimer. During substrate recognition, the Dcr-1 PAZ domain and pre-miRNA interact with the DRBM 1 domain of loqs-PB, which likely contributes to substrate recognition and stabilization. At the miRNA binding stage, the Dcr-1 DRBM domain and the loqs-PB DRBM domains then bind the pre-miRNA in tandem to form a tight 'belt' around the pre-miRNA stem, the pre-miRNA loop is docked in the loop-binding region formed by DUF283, DRBM and part of the helicase domain of Dcr-1, and the loqs-PB DRBM 1 and the wing domain of Dcr-1 act together to bind the 5' and 3' pre-miRNA termini within the PAZ and platform domains of Dcr-1. These interactions between the proteins and their pre-miRNA substrate stabilize a distorted form of the pre-miRNA and position the scissile phosphodiester bonds of the pre-miRNA at the RNase III catalytic cleavage sites of Dcr-1. Following Dcr-1 mediated cleavage, the miRNA duplex remains bound to loqs-PB DRBM 1, which dissociates from the Dcr-1 RNase III 1 domain but remains in contact with the PAZ and wing domains suggesting that the heterodimer presents the mature miRNA to AGO2 for loading into the RNA-induced silencing complex (miRISC). As to quaternary structure, able to interact with dicer enzyme Dcr-1. However, the relevance of such an interaction is unclear in vivo and another report found that it did not interact with Dcr-1. Monomer. Interacts (via C-terminus) with dicer enzyme Dcr-2 (via N-terminus); interaction is required for RNAi activity in producing siRNAs from a subset of endo- and exo-dsRNAs, and in the alternative siRLC, the interaction enhances the binding preference of the protein for the thermodynamically more stable ends of endogenous siRNAs. Interaction with Dcr-2 is RNA independent, however the isoform must bind both dsRNA and Dcr-2 to enhance Dcr-2 cleavage activity. Does not interact with Dcr-1. Strong expression in males and females. Expression in ovaries is relatively weak. As to expression, strong expression in females and relatively weak expression in males. Strong expression in ovaries.

The protein resides in the cytoplasm. The protein localises to the cytosol. Double-stranded RNA-binding protein which can function in gene silencing by acting with Dcr-1 to enhance its ATP-independent processing of a specific subset of precursor micro-RNAs (pre-miRNAs) to mature miRNAs. Some reports found it was able to enhance the efficiency of pre-miRNA processing by Dcr-1, and can shift the cleavage site of Dcr-1 altering the length of the mature miRNAs produced by Dcr-1 alone. However, in contrast to isoform PB, it is not necessary or sufficient for enhancing miRNA biogenesis, and is not required for development or female germline stem cell (GSC) maintenance. Another report also found that it decreases binding of Dcr-1 to the miRNA substrate let-7. Its function is as follows. Double-stranded RNA-binding protein which functions in gene silencing by acting with Dcr-1 to enhance its ATP-independent processing of a specific subset of precursor micro-RNAs (pre-miRNAs) to mature miRNAs. Function is essential for development and female germline stem cell (GSC) maintenance. Functions in miRNA-mediated gene silencing by enhancing the binding affinity and specific pre-miRNA processing activity of Dcr-1, and as part of the loqs-PB-Dcr-1 complex, is involved in substrate discrimination, correctly positioning the pre-miRNA in the Dcr-1 catalytic center for cleavage, and miRNA loading into the Argonaute 1 (Ago1)-containing RNA-induced silencing complex (miRISC). Increases the binding affinity of Dcr-1 to pre-miRNAs, thereby increasing dicing efficiency and broadening the range of substrates that can be processed by the dicer. It may also confer the substrate specificity of Dcr-1 towards pre-miRNAs, as in its absence Dcr-1 displays siRNA-generating activity towards long dsRNA substrates. It can also shift the cleavage site of Dcr-1 for a small number of pre-miRNAs, changing the length of the mature miRNAs produced by Dcr-1 alone. Increases the range of pre-miRNAs that can be processed by Dcr-1, by enhancing the dicing of suboptimal hairpin substrates including ones with mismatches at the dicing site. This function may also promote the generation of novel miRNA genes as it appears to have an important role in processing evolutionarily young miRNA genes, suggesting that it may also enhance dicing of substrates that have not acquired hairpin features required for efficient miRNA processing. As newly emerged miRNAs can have deleterious or beneficial effects on fitness, this function is likely part of a regulatory system that prevents excessive emergence of active miRNA genes and thus keeps them within an optimal range. Also forms a RISC loading complex (miRLC) with Dcr-1 to mediate Ago1-loading of mature miRNAs into the RNA-induced silencing complex (miRISC). In female ovaries, required for Dcr-1 to generate the twenty-three nucleotide isomiR variant of miR-307a which is able to repress its targets Gk2 and tara. In terms of biological role, double-stranded RNA-binding protein which has an essential role in gene silencing (RNAi) by acting with Dcr-2 to enhance its ATP-dependent processing of a subset of endogenous (endo) and exogenous (exo) dsRNAs into short interfering RNAs (siRNAs). Functions in RNAi by increasing the initial binding affinity of Dcr-2 to certain dsRNA substrates, and in the absence of r2d2, may also function in siRNA loading into the Argonaute 2 (AGO2)-containing RNA-induced silencing complex (siRISC) and guide strand selection for target silencing by the siRISC. Promotes Dcr-2 cleavage of a subset of dsRNAs, including endo-dsRNAs derived from convergent transcription, inverted repeats and transposons. Also enables Dcr-2 to produce hairpin-derived endo-siRNAs in the presence of cellular inhibitory inorganic phosphate, likely by increasing the binding affinity of the enzyme to the hairpin dsRNAs allowing the dsRNA to displace phosphate bound to Dcr-2. According to many reports, the cleavage reaction mode of Dcr-2 changes according to the termini of the dsRNA substrate, with the enzyme displaying a preference for processing blunt termini (BLT), likely non-self dsRNAs, over dsRNAs with 2 nucleotides 3' overhanging (3'ovr) termini, which are typically the structure of endo-dsRNAs. According to many reports, interaction with Loqs-PD modifies the molecular recognition mechanisms of Dcr-2 towards sub-optimal 3'ovr dsRNA substrates and thus enables the dicer to cleave endo-dsRNA templates with diverse termini. However, according to another report, the mode of cleavage reaction is not affected by the presence or absence of loqs-PD. In the absence of r2d2, may also form an alternative RISC loading complex (siRLC) with Dcr-2 to mediate AGO2-loading of endo- and exo-siRNAs into the RNA-induced silencing complex (siRISC). Many reports suggest that loqs-PD and r2d2 function independently with dcr-2 in distinct siRNA pathways, and may even compete for binding to the enzyme. Loaded siRNAs serve as a guide to direct the siRISC to complementary RNAs to degrade them or prevent their translation. The siRLC plays an important role in the ATP-dependent asymmetry sensing of the duplex, and is therefore also responsible for the selection of the strand that ultimately acts as the guide siRNA for the siRISC. Thermodynamically asymmetric endo-siRNAs can be pre-oriented in the siRLC by the Loqs-PD and DCr-2 complex, which preferentially binds to the most thermodynamically stable strand prior to loading into the siRISC. Appears to be involved in promoting double-strand breaks (DSBs) following exposure to a low-dose/dose-rate (LDR) of ionizing radiation. The sequence is that of Protein Loquacious from Drosophila melanogaster (Fruit fly).